A 276-amino-acid polypeptide reads, in one-letter code: MAMIFLLAALSTTHLASSLRPVAAGACRPSGYLPGKSGNCEKSNDPDCCEDGKAYPQYRFEKGKDGGGPSECDNAYHSDGELVVALSTGWFAGTARCGHRVRITASGGGGRSVVAKVVDECDSVHGCDGEHNYEAPCGNNIVDASPAVWDALGLDKNVGMEHITWGREPQGKIPVQGFSMHQLNPSQSPGKRFLVGEISLPPFGSSSREWEMVSWKCFLPAFMSINYLHGSSHLRTKLNIKGEWQLDRYPFTTLQQHILSRKFVMLWCIQVKKNVL.

A signal peptide spans 1-18; it reads MAMIFLLAALSTTHLASS.

The protein belongs to the kiwellin family.

The protein resides in the secreted. In Oryza sativa subsp. japonica (Rice), this protein is Putative ripening-related protein 5.